The sequence spans 299 residues: Tryptophan prenyltransferase ComQ (299 aa).

Residues Asp67 and Asp71 each coordinate Mg(2+).

This sequence belongs to the FPP/GGPP synthase family. It depends on Mg(2+) as a cofactor.

It localises to the cell membrane. It carries out the reaction L-tryptophyl-[protein] + (2E,6E)-farnesyl diphosphate = (2S,3R)-3-farnesyl-2,3-dihydro-2,N(alpha)-cyclo-L-tryptophyl-[protein] + diphosphate. Part of a major quorum-sensing system that regulates the development of genetic competence. Involved in the maturation of the competence pheromone ComX. Acts by catalyzing the transfer of a farnesyl group on the ComX pheromone. Shows weak geranylation activity with geranyl diphosphate (GPP). The sequence is that of Tryptophan prenyltransferase ComQ from Bacillus subtilis (strain 168).